A 202-amino-acid chain; its full sequence is ATP-dependent Clp protease proteolytic subunit (202 aa).

S101 functions as the Nucleophile in the catalytic mechanism. Residue H126 is part of the active site.

This sequence belongs to the peptidase S14 family. As to quaternary structure, component of the chloroplastic Clp protease core complex.

It is found in the plastid. The protein resides in the chloroplast stroma. The catalysed reaction is Hydrolysis of proteins to small peptides in the presence of ATP and magnesium. alpha-casein is the usual test substrate. In the absence of ATP, only oligopeptides shorter than five residues are hydrolyzed (such as succinyl-Leu-Tyr-|-NHMec, and Leu-Tyr-Leu-|-Tyr-Trp, in which cleavage of the -Tyr-|-Leu- and -Tyr-|-Trp bonds also occurs).. In terms of biological role, cleaves peptides in various proteins in a process that requires ATP hydrolysis. Has a chymotrypsin-like activity. Plays a major role in the degradation of misfolded proteins. This Buxus microphylla (Littleleaf boxwood) protein is ATP-dependent Clp protease proteolytic subunit.